The following is a 353-amino-acid chain: MSTPMDIKNALNRVVNQLDLTTEEMSDVMREIMTGQCTEAQIGAFLMGMRMKSETIDEIVGAVSVMRELAGKVELKTLDGVVDIVGTGGDGANIFNVSTASAFVIAAAGCTVAKHGNRAVSGKSGSADLLEAAGVYLNLTPVQVARCIDSVGIGFMFAQSHHTAMKHTAGPRRELGLRTLFNMLGPLTNPAGVRHQIVGVFNQALCRPLAEVLLRLGSKHVLVVHSQDGLDEFSLAAPTFVAELKNGEVTEYWVQPEDLGIKSQSLYGLAVESPAASLELIRDALGRRKTENGQKAAEMIVLNAGAALYAADHATSLKEGVALAHDALHTGLAREKLEELGAFTAVFKQENEA.

5-phospho-alpha-D-ribose 1-diphosphate is bound by residues G86, 89–90 (GD), 96–99 (NVST), 114–122 (KHGNRAVSG), and S126. G86 serves as a coordination point for anthranilate. Residue S98 coordinates Mg(2+). Residue N117 coordinates anthranilate. An anthranilate-binding site is contributed by R172. Residues D231 and E232 each contribute to the Mg(2+) site.

The protein belongs to the anthranilate phosphoribosyltransferase family. As to quaternary structure, homodimer. The cofactor is Mg(2+).

It catalyses the reaction N-(5-phospho-beta-D-ribosyl)anthranilate + diphosphate = 5-phospho-alpha-D-ribose 1-diphosphate + anthranilate. Its pathway is amino-acid biosynthesis; L-tryptophan biosynthesis; L-tryptophan from chorismate: step 2/5. Its function is as follows. Catalyzes the transfer of the phosphoribosyl group of 5-phosphorylribose-1-pyrophosphate (PRPP) to anthranilate to yield N-(5'-phosphoribosyl)-anthranilate (PRA). The protein is Anthranilate phosphoribosyltransferase of Pseudomonas syringae pv. syringae (strain B728a).